Here is a 619-residue protein sequence, read N- to C-terminus: Secretogranin-2 (619 aa).

The N-terminal stretch at 1-30 (MTESKAYRFGAVLLLIHLIFLVPGTEAASF) is a signal peptide. Tyrosine 153 carries the post-translational modification Sulfotyrosine. Phosphoserine is present on residues serine 176 and serine 270. A disordered region spans residues 247–307 (VGGEDWSPME…RKESKDQLSE (61 aa)). Basic and acidic residues-rich tracts occupy residues 255–286 (MEEKIETQTQEEVRDSKENTEKNEQINEEMKR) and 295–307 (EGNRKESKDQLSE). Residues serine 434, serine 534, serine 557, and serine 558 each carry the phosphoserine modification.

The protein belongs to the chromogranin/secretogranin protein family. Interacts with Secretogranin III/SCG3. Brain. Expression in the pituitary is restricted to the anterior lobe. Expression in the hypothalamus is observed in the neuronal cells and neurons of arcuate nucleus, supraoptic nucleus and median eminence (at protein level).

The protein localises to the secreted. Neuroendocrine protein of the granin family that regulates the biogenesis of secretory granules. The sequence is that of Secretogranin-2 (Scg2) from Rattus norvegicus (Rat).